Reading from the N-terminus, the 202-residue chain is dTTP/UTP pyrophosphatase (202 aa).

Catalysis depends on aspartate 80, which acts as the Proton acceptor.

Belongs to the Maf family. YhdE subfamily. Requires a divalent metal cation as cofactor.

Its subcellular location is the cytoplasm. The enzyme catalyses dTTP + H2O = dTMP + diphosphate + H(+). It catalyses the reaction UTP + H2O = UMP + diphosphate + H(+). Functionally, nucleoside triphosphate pyrophosphatase that hydrolyzes dTTP and UTP. May have a dual role in cell division arrest and in preventing the incorporation of modified nucleotides into cellular nucleic acids. This chain is dTTP/UTP pyrophosphatase, found in Alkalilimnicola ehrlichii (strain ATCC BAA-1101 / DSM 17681 / MLHE-1).